The chain runs to 695 residues: C6 finger domain transcription factor nscR (695 aa).

The zn(2)-C6 fungal-type DNA-binding region spans 17 to 43 (CELCRERKVKCDKLDPCTNCASAGVVC). A compositionally biased stretch (low complexity) spans 101 to 113 (SMRSSASQSSNQD). Residues 101–146 (SMRSSASQSSNQDQESRDAIESISNETEDASAPTPDSSRMPLGDGG) are disordered.

It is found in the nucleus. Functionally, transcription factor that specifically regulates the neosartoricin B biosynthesis gene cluster. In Arthroderma otae (strain ATCC MYA-4605 / CBS 113480) (Microsporum canis), this protein is C6 finger domain transcription factor nscR.